The sequence spans 67 residues: Large ribosomal subunit protein uL30 (67 aa).

This sequence belongs to the universal ribosomal protein uL30 family. Part of the 50S ribosomal subunit.

The chain is Large ribosomal subunit protein uL30 from Sorangium cellulosum (strain So ce56) (Polyangium cellulosum (strain So ce56)).